The primary structure comprises 252 residues: 2-succinyl-6-hydroxy-2,4-cyclohexadiene-1-carboxylate synthase (252 aa).

The protein belongs to the AB hydrolase superfamily. MenH family. In terms of assembly, monomer.

The catalysed reaction is 5-enolpyruvoyl-6-hydroxy-2-succinyl-cyclohex-3-ene-1-carboxylate = (1R,6R)-6-hydroxy-2-succinyl-cyclohexa-2,4-diene-1-carboxylate + pyruvate. It participates in quinol/quinone metabolism; 1,4-dihydroxy-2-naphthoate biosynthesis; 1,4-dihydroxy-2-naphthoate from chorismate: step 3/7. The protein operates within quinol/quinone metabolism; menaquinone biosynthesis. Functionally, catalyzes a proton abstraction reaction that results in 2,5-elimination of pyruvate from 2-succinyl-5-enolpyruvyl-6-hydroxy-3-cyclohexene-1-carboxylate (SEPHCHC) and the formation of 2-succinyl-6-hydroxy-2,4-cyclohexadiene-1-carboxylate (SHCHC). The chain is 2-succinyl-6-hydroxy-2,4-cyclohexadiene-1-carboxylate synthase from Escherichia coli (strain K12 / MC4100 / BW2952).